A 212-amino-acid chain; its full sequence is Ribosomal RNA small subunit methyltransferase G (212 aa).

Residues G80, L85, 131–132 (AE), and R146 each bind S-adenosyl-L-methionine.

This sequence belongs to the methyltransferase superfamily. RNA methyltransferase RsmG family.

The protein resides in the cytoplasm. The enzyme catalyses guanosine(527) in 16S rRNA + S-adenosyl-L-methionine = N(7)-methylguanosine(527) in 16S rRNA + S-adenosyl-L-homocysteine. Functionally, specifically methylates the N7 position of guanine in position 527 of 16S rRNA. This Xanthomonas oryzae pv. oryzae (strain MAFF 311018) protein is Ribosomal RNA small subunit methyltransferase G.